The primary structure comprises 254 residues: 5'-nucleotidase SurE (254 aa).

A divalent metal cation is bound by residues aspartate 8, aspartate 9, serine 40, and asparagine 93.

It belongs to the SurE nucleotidase family. A divalent metal cation serves as cofactor.

It localises to the cytoplasm. It carries out the reaction a ribonucleoside 5'-phosphate + H2O = a ribonucleoside + phosphate. In terms of biological role, nucleotidase that shows phosphatase activity on nucleoside 5'-monophosphates. In Rhizorhabdus wittichii (strain DSM 6014 / CCUG 31198 / JCM 15750 / NBRC 105917 / EY 4224 / RW1) (Sphingomonas wittichii), this protein is 5'-nucleotidase SurE.